A 205-amino-acid chain; its full sequence is Ribosomal RNA small subunit methyltransferase G (205 aa).

Residues G66, F71, 119 to 120 (IE), and R135 contribute to the S-adenosyl-L-methionine site.

Belongs to the methyltransferase superfamily. RNA methyltransferase RsmG family.

It localises to the cytoplasm. The enzyme catalyses guanosine(527) in 16S rRNA + S-adenosyl-L-methionine = N(7)-methylguanosine(527) in 16S rRNA + S-adenosyl-L-homocysteine. Its function is as follows. Specifically methylates the N7 position of guanine in position 527 of 16S rRNA. The polypeptide is Ribosomal RNA small subunit methyltransferase G (Rhizobium etli (strain ATCC 51251 / DSM 11541 / JCM 21823 / NBRC 15573 / CFN 42)).